The primary structure comprises 341 residues: UDP-N-acetylenolpyruvoylglucosamine reductase (341 aa).

One can recognise an FAD-binding PCMH-type domain in the interval 12 to 182 (LSAYAKRLDI…ISVGLLLKKN (171 aa)). The active site involves Arg-158. The active-site Proton donor is the Ser-228. Glu-324 is an active-site residue.

This sequence belongs to the MurB family. FAD serves as cofactor.

It is found in the cytoplasm. The catalysed reaction is UDP-N-acetyl-alpha-D-muramate + NADP(+) = UDP-N-acetyl-3-O-(1-carboxyvinyl)-alpha-D-glucosamine + NADPH + H(+). It functions in the pathway cell wall biogenesis; peptidoglycan biosynthesis. Functionally, cell wall formation. This chain is UDP-N-acetylenolpyruvoylglucosamine reductase, found in Photorhabdus laumondii subsp. laumondii (strain DSM 15139 / CIP 105565 / TT01) (Photorhabdus luminescens subsp. laumondii).